Consider the following 567-residue polypeptide: Cytochrome P450 monooxygenase 231 (567 aa).

A helical transmembrane segment spans residues 3 to 23 (VSTNELAILAIVLLATGVLFY). N-linked (GlcNAc...) asparagine glycans are attached at residues N81 and N223. C475 provides a ligand contact to heme.

This sequence belongs to the cytochrome P450 family. It depends on heme as a cofactor.

It localises to the membrane. It participates in secondary metabolite biosynthesis. Its function is as follows. Cytochrome P450 monooxygenase that is able to use anthracene, carbazole, pyrene, and phenanthrene as substrates for oxidation. These multifunctional properties against a series of polycyclic aromatic hydrocarbons (PAHs) suggest that CYP231 would play important roles, at least in part, in fungal metabolic systems involved in xenobiotic detoxification. The polypeptide is Cytochrome P450 monooxygenase 231 (Postia placenta (strain ATCC 44394 / Madison 698-R) (Brown rot fungus)).